The chain runs to 457 residues: tRNA-2-methylthio-N(6)-dimethylallyladenosine synthase (457 aa).

The MTTase N-terminal domain maps to 3–120; it reads KKVYVKTFGC…LPQMIDARRE (118 aa). [4Fe-4S] cluster is bound by residues cysteine 12, cysteine 49, cysteine 83, cysteine 157, cysteine 161, and cysteine 164. In terms of domain architecture, Radical SAM core spans 143–377; it reads RVEGPSAFVS…QATIEENVAR (235 aa). A TRAM domain is found at 380-447; that stretch reads QSMLGKVERI…PHSLRGELVL (68 aa).

This sequence belongs to the methylthiotransferase family. MiaB subfamily. In terms of assembly, monomer. [4Fe-4S] cluster serves as cofactor.

The protein resides in the cytoplasm. The catalysed reaction is N(6)-dimethylallyladenosine(37) in tRNA + (sulfur carrier)-SH + AH2 + 2 S-adenosyl-L-methionine = 2-methylsulfanyl-N(6)-dimethylallyladenosine(37) in tRNA + (sulfur carrier)-H + 5'-deoxyadenosine + L-methionine + A + S-adenosyl-L-homocysteine + 2 H(+). Functionally, catalyzes the methylthiolation of N6-(dimethylallyl)adenosine (i(6)A), leading to the formation of 2-methylthio-N6-(dimethylallyl)adenosine (ms(2)i(6)A) at position 37 in tRNAs that read codons beginning with uridine. The polypeptide is tRNA-2-methylthio-N(6)-dimethylallyladenosine synthase (Burkholderia thailandensis (strain ATCC 700388 / DSM 13276 / CCUG 48851 / CIP 106301 / E264)).